Here is a 473-residue protein sequence, read N- to C-terminus: Gamma-aminobutyric acid receptor subunit beta-3 (473 aa).

The N-terminal stretch at 1–25 (MWGLAGGRLFGIFSAPVLVAVVCCA) is a signal peptide. Over 26 to 246 (QSVNDPGNMS…FRLKRNIGYF (221 aa)) the chain is Extracellular. Residues Asn33 and Asn105 are each glycosylated (N-linked (GlcNAc...) asparagine). 120–122 (DTY) is a binding site for benzamidine. Residue Tyr122 participates in 4-aminobutanoate binding. Position 122 (Tyr122) interacts with histamine. A disulfide bond links Cys161 and Cys175. Asn174 is a glycosylation site (N-linked (GlcNAc...) asparagine). Residues Glu180 and Tyr182 each contribute to the 4-aminobutanoate site. Residues 180–182 (ESY) and Phe225 each bind benzamidine. 181-182 (SY) serves as a coordination point for histamine. Thr227 lines the 4-aminobutanoate pocket. A histamine-binding site is contributed by Thr227. Residues 247 to 267 (ILQTYMPSILITILSWVSFWI) form a helical membrane-spanning segment. Over 268-271 (NYDA) the chain is Cytoplasmic. The chain crosses the membrane as a helical span at residues 272-292 (SAARVALGITTVLTMTTINTH). Residues 293–304 (LRETLPKIPYVK) are Extracellular-facing. The chain crosses the membrane as a helical span at residues 305 to 328 (AIDMYLMGCFVFVFLALLEYAFVN). Over 329–447 (YIFFGRGPQR…KIPDLTDVNA (119 aa)) the chain is Cytoplasmic. Residues 448 to 470 (IDRWSRIVFPFTFSLFNLVYWLY) form a helical membrane-spanning segment. The Extracellular segment spans residues 471 to 473 (YVN).

The protein belongs to the ligand-gated ion channel (TC 1.A.9) family. Gamma-aminobutyric acid receptor (TC 1.A.9.5) subfamily. GABRB3 sub-subfamily. Heteropentamer, formed by a combination of alpha (GABRA1-6), beta (GABRB1-3), gamma (GABRG1-3), delta (GABRD), epsilon (GABRE), rho (GABRR1-3), pi (GABRP) and theta (GABRQ) chains, each subunit exhibiting distinct physiological and pharmacological properties. Can form functional homopentamers (in vitro). Interacts with UBQLN1. May interact with KIF21B. Identified in a complex of 720 kDa composed of LHFPL4, NLGN2, GABRA1, GABRB2, GABRG2 and GABRB3. Interacts with LHFPL4. Interacts with GIT1; this interaction is required for synaptic GABRB3 surface stability and inhibitory synapse strength.

The protein localises to the postsynaptic cell membrane. The protein resides in the cell membrane. Its subcellular location is the cytoplasmic vesicle membrane. It carries out the reaction chloride(in) = chloride(out). With respect to regulation, potentiated by histamine. Beta subunit of the heteropentameric ligand-gated chloride channel gated by gamma-aminobutyric acid (GABA), a major inhibitory neurotransmitter in the brain. GABA-gated chloride channels, also named GABA(A) receptors (GABAAR), consist of five subunits arranged around a central pore and contain GABA active binding site(s) located at the alpha and beta subunit interface(s). GABAARs containing beta-3/GABRB3 subunit are found at both synaptic and extrasynaptic sites. When activated by GABA, GABAARs selectively allow the flow of chloride anions across the cell membrane down their electrochemical gradient. Chloride influx into the postsynaptic neuron following GABAAR opening decreases the neuron ability to generate a new action potential, thereby reducing nerve transmission. GABAARs containing alpha-1 and beta-3 subunits exhibit synaptogenic activity; the gamma-2 subunit being necessary but not sufficient to induce rapid synaptic contacts formation. Extrasynaptic beta-3 receptors contribute to the tonic GABAergic inhibition. GABAARs containing alpha-1, beta-3 and epsilon subunits may also permit spontaneous chloride channel activity while preserving the structural information required for GABA-gated openings. Beta-containing GABAARs can simultaneously bind GABA and histamine where histamine binds at the interface of two neighboring beta subunits, which may be involved in the regulation of sleep and wakefulness. Plays an important role in somatosensation and in the production of antinociception. The polypeptide is Gamma-aminobutyric acid receptor subunit beta-3 (Homo sapiens (Human)).